The chain runs to 113 residues: Bactofilin BacN (113 aa).

Belongs to the bactofilin family. Interacts with BacO and BacP, the 3 proteins colocalize as an extended structure.

Its subcellular location is the cytoplasm. It is found in the cytoskeleton. In terms of biological role, a non-essential component of the chromosome segregation machinery. Positions the ParA-ParB-parS chromosome segregation machinery within the cell; BacP seems to be the most important bactofilin in this process. Forms a heteropolymeric, subpolar scaffold in the cell; BacP probably forms the core, BacO contributes to position and integrity while BacN does not seem to contribute to assembly. The chain is Bactofilin BacN from Myxococcus xanthus (strain DK1622).